Here is a 527-residue protein sequence, read N- to C-terminus: Bifunctional purine biosynthesis protein PurH (527 aa).

The MGS-like domain maps to 8–156; sequence AGAKRPIRRA…KNHPSVAVVV (149 aa).

The protein belongs to the PurH family.

The enzyme catalyses (6R)-10-formyltetrahydrofolate + 5-amino-1-(5-phospho-beta-D-ribosyl)imidazole-4-carboxamide = 5-formamido-1-(5-phospho-D-ribosyl)imidazole-4-carboxamide + (6S)-5,6,7,8-tetrahydrofolate. The catalysed reaction is IMP + H2O = 5-formamido-1-(5-phospho-D-ribosyl)imidazole-4-carboxamide. Its pathway is purine metabolism; IMP biosynthesis via de novo pathway; 5-formamido-1-(5-phospho-D-ribosyl)imidazole-4-carboxamide from 5-amino-1-(5-phospho-D-ribosyl)imidazole-4-carboxamide (10-formyl THF route): step 1/1. It participates in purine metabolism; IMP biosynthesis via de novo pathway; IMP from 5-formamido-1-(5-phospho-D-ribosyl)imidazole-4-carboxamide: step 1/1. In Mycobacterium sp. (strain JLS), this protein is Bifunctional purine biosynthesis protein PurH.